The following is a 541-amino-acid chain: Man(5)GlcNAc(2)-PP-dolichol translocation protein RFT1 (541 aa).

11 helical membrane passes run 16–36 (SGLLLQVLFRLITFVLNAFIL), 45–62 (GIVNVRLTLLYSTTTFLA), 85–105 (LLWLTVPLGIFWSSCLGWVWL), 123–143 (VLFFGLSAVVELLGEPFWVLA), 154–176 (LAESMSVILRSVLTALLVLWLPH), 187–207 (LLYTTVLVLCYAIYLIQLLRS), 335–355 (LALLTGLTMTVFGFAYSQLAL), 376–396 (CLYVLLLAINGVTECFMFAAM), 414–434 (SFLVLSYLLTSWCGSVGFIMA), 470–490 (VLLGVFILSAGITSVSEAFLC), and 499–519 (LAHIAVGTICLGVTLGTAFLT).

It belongs to the RFT1 family.

The protein localises to the endoplasmic reticulum membrane. It participates in protein modification; protein glycosylation. In terms of biological role, intramembrane glycolipid transporter that operates in the biosynthetic pathway of dolichol-linked oligosaccharides, the glycan precursors employed in protein asparagine (N)-glycosylation. The sequential addition of sugars to dolichol pyrophosphate produces dolichol-linked oligosaccharides containing fourteen sugars, including two GlcNAcs, nine mannoses and three glucoses. Once assembled, the oligosaccharide is transferred from the lipid to nascent proteins by oligosaccharyltransferases. The assembly of dolichol-linked oligosaccharides begins on the cytosolic side of the endoplasmic reticulum membrane and finishes in its lumen. RFT1 could mediate the translocation of the cytosolically oriented intermediate DolPP-GlcNAc2Man5, produced by ALG11, into the ER lumen where dolichol-linked oligosaccharides assembly continues. However, the intramembrane lipid transporter activity could not be confirmed in vitro. The polypeptide is Man(5)GlcNAc(2)-PP-dolichol translocation protein RFT1 (Mus musculus (Mouse)).